A 491-amino-acid polypeptide reads, in one-letter code: UDP-N-acetylmuramate--L-alanine ligase (491 aa).

126–132 (GTHGKTT) serves as a coordination point for ATP.

The protein belongs to the MurCDEF family.

It localises to the cytoplasm. The enzyme catalyses UDP-N-acetyl-alpha-D-muramate + L-alanine + ATP = UDP-N-acetyl-alpha-D-muramoyl-L-alanine + ADP + phosphate + H(+). The protein operates within cell wall biogenesis; peptidoglycan biosynthesis. Cell wall formation. The sequence is that of UDP-N-acetylmuramate--L-alanine ligase from Photorhabdus laumondii subsp. laumondii (strain DSM 15139 / CIP 105565 / TT01) (Photorhabdus luminescens subsp. laumondii).